A 391-amino-acid chain; its full sequence is 3-ketoacyl-CoA thiolase (391 aa).

The active-site Acyl-thioester intermediate is the C95. Active-site proton acceptor residues include H347 and C377.

Belongs to the thiolase-like superfamily. Thiolase family. Heterotetramer of two alpha chains (FadB) and two beta chains (FadA).

The protein localises to the cytoplasm. It catalyses the reaction an acyl-CoA + acetyl-CoA = a 3-oxoacyl-CoA + CoA. It participates in lipid metabolism; fatty acid beta-oxidation. Functionally, catalyzes the final step of fatty acid oxidation in which acetyl-CoA is released and the CoA ester of a fatty acid two carbons shorter is formed. This is 3-ketoacyl-CoA thiolase from Pseudomonas syringae pv. tomato (strain ATCC BAA-871 / DC3000).